We begin with the raw amino-acid sequence, 98 residues long: Sm-like protein LSM8 (98 aa).

Residues 2 to 78 (AATTGLETLV…IGVIGELDEE (77 aa)) enclose the Sm domain.

Belongs to the snRNP Sm proteins family. In terms of assembly, component of the heptameric LSM2-LSM8 complex that forms a seven-membered ring structure with a donut shape. The LSM subunits are arranged in the order LSM8, LSM2, LSM3, LSM6, LSM5, LSM7 and LSM4. LSM8 subunit interacts only with its two neighboring subunits, LSM2 and LSM4. Interacts with the prefoldin co-chaperone subunits PFD1, PFD2, PFD3, PFD4, PFD5 and PFD6. Expressed in roots, leaves, stems, flowers and siliques.

Its subcellular location is the nucleus. In terms of biological role, component of the nuclear LSM2-LSM8 complex which is involved splicing nuclear mRNAs. LSM2-LSM8 binds directly to the U6 small nuclear RNAs (snRNAs). LSM8 is essential for the formation of the nuclear LSM2-LSM8 complex involved in the accurate splicing of selected development-related mRNAs through the stabilization of the spliceosomal U6 snRNA. Plays a critical role in the regulation of development-related gene expression. This is Sm-like protein LSM8 from Arabidopsis thaliana (Mouse-ear cress).